A 296-amino-acid chain; its full sequence is tRNA-cytidine(32) 2-sulfurtransferase (296 aa).

A PP-loop motif motif is present at residues 72–77 (SGGKDS). C147, C150, and C238 together coordinate [4Fe-4S] cluster.

This sequence belongs to the TtcA family. In terms of assembly, homodimer. The cofactor is Mg(2+). Requires [4Fe-4S] cluster as cofactor.

The protein localises to the cytoplasm. The enzyme catalyses cytidine(32) in tRNA + S-sulfanyl-L-cysteinyl-[cysteine desulfurase] + AH2 + ATP = 2-thiocytidine(32) in tRNA + L-cysteinyl-[cysteine desulfurase] + A + AMP + diphosphate + H(+). Its pathway is tRNA modification. Catalyzes the ATP-dependent 2-thiolation of cytidine in position 32 of tRNA, to form 2-thiocytidine (s(2)C32). The sulfur atoms are provided by the cysteine/cysteine desulfurase (IscS) system. The sequence is that of tRNA-cytidine(32) 2-sulfurtransferase from Sinorhizobium fredii (strain NBRC 101917 / NGR234).